The chain runs to 227 residues: Cytochrome c oxidase subunit 2 (227 aa).

Residues 1–26 (MATWSNLSLQDGASPLMEQLSFFHDH) lie on the Mitochondrial intermembrane side of the membrane. A helical membrane pass occupies residues 27–48 (TMIDLLLITMIVGYSLSYMLLT). Over 49 to 62 (KYTNRNMLHGHLIE) the chain is Mitochondrial matrix. Residues 63–82 (TIWTALPAITLIFIALPSLR) form a helical membrane-spanning segment. The Mitochondrial intermembrane segment spans residues 83 to 227 (LLYLLDDSSD…LFIKWLSNMM (145 aa)). H161, C196, E198, C200, H204, and M207 together coordinate Cu cation. Position 198 (E198) interacts with Mg(2+).

It belongs to the cytochrome c oxidase subunit 2 family. As to quaternary structure, component of the cytochrome c oxidase (complex IV, CIV), a multisubunit enzyme composed of a catalytic core of 3 subunits and several supernumerary subunits. The complex exists as a monomer or a dimer and forms supercomplexes (SCs) in the inner mitochondrial membrane with ubiquinol-cytochrome c oxidoreductase (cytochrome b-c1 complex, complex III, CIII). The cofactor is Cu cation.

Its subcellular location is the mitochondrion inner membrane. The enzyme catalyses 4 Fe(II)-[cytochrome c] + O2 + 8 H(+)(in) = 4 Fe(III)-[cytochrome c] + 2 H2O + 4 H(+)(out). Functionally, component of the cytochrome c oxidase, the last enzyme in the mitochondrial electron transport chain which drives oxidative phosphorylation. The respiratory chain contains 3 multisubunit complexes succinate dehydrogenase (complex II, CII), ubiquinol-cytochrome c oxidoreductase (cytochrome b-c1 complex, complex III, CIII) and cytochrome c oxidase (complex IV, CIV), that cooperate to transfer electrons derived from NADH and succinate to molecular oxygen, creating an electrochemical gradient over the inner membrane that drives transmembrane transport and the ATP synthase. Cytochrome c oxidase is the component of the respiratory chain that catalyzes the reduction of oxygen to water. Electrons originating from reduced cytochrome c in the intermembrane space (IMS) are transferred via the dinuclear copper A center (CU(A)) of subunit 2 and heme A of subunit 1 to the active site in subunit 1, a binuclear center (BNC) formed by heme A3 and copper B (CU(B)). The BNC reduces molecular oxygen to 2 water molecules using 4 electrons from cytochrome c in the IMS and 4 protons from the mitochondrial matrix. The polypeptide is Cytochrome c oxidase subunit 2 (COII) (Locusta migratoria (Migratory locust)).